A 382-amino-acid chain; its full sequence is 3-dehydroquinate synthase (382 aa).

NAD(+) contacts are provided by residues 115–119 (GVVGD), 139–140 (TS), Lys152, and Lys161. Residues Glu194, His256, and His274 each contribute to the Zn(2+) site.

It belongs to the sugar phosphate cyclases superfamily. Dehydroquinate synthase family. Requires Co(2+) as cofactor. Zn(2+) serves as cofactor. The cofactor is NAD(+).

Its subcellular location is the cytoplasm. It catalyses the reaction 7-phospho-2-dehydro-3-deoxy-D-arabino-heptonate = 3-dehydroquinate + phosphate. Its pathway is metabolic intermediate biosynthesis; chorismate biosynthesis; chorismate from D-erythrose 4-phosphate and phosphoenolpyruvate: step 2/7. Catalyzes the conversion of 3-deoxy-D-arabino-heptulosonate 7-phosphate (DAHP) to dehydroquinate (DHQ). The polypeptide is 3-dehydroquinate synthase (Rhodopseudomonas palustris (strain BisB18)).